The following is a 131-amino-acid chain: uncharacterized protein (131 aa).

2 helical membrane-spanning segments follow: residues 68–88 (VVRATPIIGPYAGLPVIVAPI) and 94–114 (VLGAIGVVDITAGIFEDIVAI).

It is found in the cell membrane. This is an uncharacterized protein from Methanocaldococcus jannaschii (strain ATCC 43067 / DSM 2661 / JAL-1 / JCM 10045 / NBRC 100440) (Methanococcus jannaschii).